A 273-amino-acid polypeptide reads, in one-letter code: Dermonecrotic toxin LapSicTox-alphaIB2 (273 aa).

Residue His-5 is part of the active site. Mg(2+)-binding residues include Glu-25 and Asp-27. The active-site Nucleophile is the His-41. 2 disulfides stabilise this stretch: Cys-45-Cys-51 and Cys-47-Cys-190. Residue Asp-85 coordinates Mg(2+). N-linked (GlcNAc...) asparagine glycosylation occurs at Asn-250.

Belongs to the arthropod phospholipase D family. Class II subfamily. Requires Mg(2+) as cofactor. As to expression, expressed by the venom gland.

The protein resides in the secreted. It catalyses the reaction an N-(acyl)-sphingosylphosphocholine = an N-(acyl)-sphingosyl-1,3-cyclic phosphate + choline. The enzyme catalyses an N-(acyl)-sphingosylphosphoethanolamine = an N-(acyl)-sphingosyl-1,3-cyclic phosphate + ethanolamine. It carries out the reaction a 1-acyl-sn-glycero-3-phosphocholine = a 1-acyl-sn-glycero-2,3-cyclic phosphate + choline. The catalysed reaction is a 1-acyl-sn-glycero-3-phosphoethanolamine = a 1-acyl-sn-glycero-2,3-cyclic phosphate + ethanolamine. Functionally, dermonecrotic toxins cleave the phosphodiester linkage between the phosphate and headgroup of certain phospholipids (sphingolipid and lysolipid substrates), forming an alcohol (often choline) and a cyclic phosphate. This toxin acts on sphingomyelin (SM). It may also act on ceramide phosphoethanolamine (CPE), lysophosphatidylcholine (LPC) and lysophosphatidylethanolamine (LPE), but not on lysophosphatidylserine (LPS), and lysophosphatidylglycerol (LPG). It acts by transphosphatidylation, releasing exclusively cyclic phosphate products as second products. Induces dermonecrosis, hemolysis, increased vascular permeability, edema, inflammatory response, and platelet aggregation. The chain is Dermonecrotic toxin LapSicTox-alphaIB2 from Loxosceles apachea (Apache recluse spider).